A 462-amino-acid chain; its full sequence is dTDP-4-dehydro-2,6-dideoxy-D-glucose 3-dehydratase (462 aa).

Pyridoxal 5'-phosphate-binding positions include 112-113, aspartate 220, and serine 241; that span reads GS. Histidine 246 acts as the Proton donor/acceptor in catalysis. Asparagine 314 provides a ligand contact to pyridoxal 5'-phosphate.

The protein belongs to the DegT/DnrJ/EryC1 family. Homodimer. Pyridoxal 5'-phosphate serves as cofactor.

The catalysed reaction is dTDP-4-dehydro-2,6-dideoxy-alpha-D-glucose + 2 reduced [2Fe-2S]-[ferredoxin] + 2 H(+) = dTDP-4-dehydro-2,3,6-trideoxy-alpha-D-hexopyranose + 2 oxidized [2Fe-2S]-[ferredoxin] + H2O. Involved in the biosynthesis of forosamine ((4-dimethylamino)-2,3,4,6-tetradeoxy-alpha-D-threo-hexopyranose), a highly deoxygenated sugar component of several bioactive natural products such as the insecticidal spinosyns A and D. Catalyzes C-3 deoxygenation of dTDP-4-keto-2,6-dideoxy-alpha-D-glucose to yield dTDP-4-keto-2,3,6-trideoxy-D-glucose via a combined transamination-deoxygenation reaction. The catalysis is initiated by a transamination step in which pyridoxal 5'-phosphate (PLP) is converted to pyridoxamine 5'-phosphate (PMP) in the presence of L-glutamate. This coenzyme then forms a Schiff base with dTDP-4-keto-2,6-dideoxy-alpha-D-glucose and the resulting adduct undergoes a PMP-mediated beta-dehydration reaction to give a sugar enamine intermediate, which after a 2 electrons reduction and hydrolysis yields dTDP-4-keto-2,3,6-trideoxy-D-glucose as a product. Requires cellular reductase (ferredoxin or flavodoxin reductase) rather than a specific partner reductase. L-glutamate is 20-fold more efficient than L-aspartate as an amino donor. In the absence of an electron source and in the presence of L-glutamate, catalyzes a transamination reaction, converting dTDP-4-keto-2,6-dideoxy-alpha-D-glucose to dTDP-4-amino-2,4,6-trideoxy-D-glucose. In Saccharopolyspora spinosa, this protein is dTDP-4-dehydro-2,6-dideoxy-D-glucose 3-dehydratase.